Here is a 277-residue protein sequence, read N- to C-terminus: MEVKGFIEIMRPHNCILAGIVGILGALVAYEGIPDIKTLTLIFWVVYFGCSGGNTANDYFDYEIDKINRPNRPLPRGAMSRRAALYYALLQYAIGSILAYFLNIRAFVFATIAYFLTFLYGWKLKPLPLVGNITVAALTAATPIYGAIGVGRIGLAGYLAICAFLVNVSREIMKDIEDIEGDKALGARTLPIIIGEKKAAIIAAIFGFLTVIASFLPVKVGIGLGYAPIIIVDIIIIKASIDVLRDPKAASKGQKLLKIATFVAVISFLAGALTKGV.

Transmembrane regions (helical) follow at residues 16–36 (ILAGIVGILGALVAYEGIPDI), 84–104 (ALYYALLQYAIGSILAYFLNI), 107–127 (FVFATIAYFLTFLYGWKLKPL), 146–166 (GAIGVGRIGLAGYLAICAFLV), 200–220 (AIIAAIFGFLTVIASFLPVKV), 221–241 (GIGLGYAPIIIVDIIIIKASI), and 257–277 (LKIATFVAVISFLAGALTKGV).

The protein belongs to the UbiA prenyltransferase family. DGGGP synthase subfamily. It depends on Mg(2+) as a cofactor.

Its subcellular location is the cell membrane. It catalyses the reaction sn-3-O-(geranylgeranyl)glycerol 1-phosphate + (2E,6E,10E)-geranylgeranyl diphosphate = 2,3-bis-O-(geranylgeranyl)-sn-glycerol 1-phosphate + diphosphate. It functions in the pathway membrane lipid metabolism; glycerophospholipid metabolism. In terms of biological role, prenyltransferase that catalyzes the transfer of the geranylgeranyl moiety of geranylgeranyl diphosphate (GGPP) to the C2 hydroxyl of (S)-3-O-geranylgeranylglyceryl phosphate (GGGP). This reaction is the second ether-bond-formation step in the biosynthesis of archaeal membrane lipids. The protein is Digeranylgeranylglyceryl phosphate synthase of Pyrococcus furiosus (strain ATCC 43587 / DSM 3638 / JCM 8422 / Vc1).